The chain runs to 491 residues: UDP-N-acetylmuramate--L-alanine ligase (491 aa).

126 to 132 (GTHGKTT) serves as a coordination point for ATP.

It belongs to the MurCDEF family.

It localises to the cytoplasm. The catalysed reaction is UDP-N-acetyl-alpha-D-muramate + L-alanine + ATP = UDP-N-acetyl-alpha-D-muramoyl-L-alanine + ADP + phosphate + H(+). The protein operates within cell wall biogenesis; peptidoglycan biosynthesis. Its function is as follows. Cell wall formation. The polypeptide is UDP-N-acetylmuramate--L-alanine ligase (Salmonella paratyphi C (strain RKS4594)).